Consider the following 429-residue polypeptide: Fumarylacetoacetase (429 aa).

Asp139 lines the Ca(2+) pocket. The active-site Proton acceptor is His146. Arg155 is a binding site for substrate. Glu212, Glu214, and Asp246 together coordinate Ca(2+). Position 246 (Asp246) interacts with Mg(2+). Gln253 contributes to the substrate binding site. Residues Lys266 and Thr270 each contribute to the Mg(2+) site. Thr363 lines the substrate pocket.

This sequence belongs to the FAH family. Ca(2+) serves as cofactor. The cofactor is Mg(2+).

The enzyme catalyses 4-fumarylacetoacetate + H2O = acetoacetate + fumarate + H(+). It functions in the pathway amino-acid degradation; L-phenylalanine degradation; acetoacetate and fumarate from L-phenylalanine: step 6/6. Its function is as follows. Converts fumarylacetoacetate to acetoacetate and fumarate. Involved in tyrosine catabolic pathway. Catalyzes the final step in the tyrosine degradation pathway. The polypeptide is Fumarylacetoacetase (Oryza sativa subsp. japonica (Rice)).